The following is an 824-amino-acid chain: Translation initiation factor IF-2 (824 aa).

Positions 1–234 (MSDQDGKKPL…RQKAMGGSVD (234 aa)) are disordered. Composition is skewed to basic and acidic residues over residues 59 to 75 (GGKR…DRRL) and 82 to 144 (KARE…RRNA). Positions 145 to 159 (PPEAAAPAVDPAAAA) are enriched in low complexity. The span at 170 to 186 (ARREPERDNKRENRSRG) shows a compositional bias: basic and acidic residues. Positions 321–491 (PRPPVITIMG…ALQAELLELK (171 aa)) constitute a tr-type G domain. The tract at residues 330–337 (GHVDHGKT) is G1. 330 to 337 (GHVDHGKT) contacts GTP. Positions 355–359 (GITQH) are G2. The interval 377–380 (DTPG) is G3. GTP contacts are provided by residues 377–381 (DTPGH) and 431–434 (NKID). The segment at 431–434 (NKID) is G4. Residues 467-469 (SAM) are G5.

This sequence belongs to the TRAFAC class translation factor GTPase superfamily. Classic translation factor GTPase family. IF-2 subfamily.

It localises to the cytoplasm. Its function is as follows. One of the essential components for the initiation of protein synthesis. Protects formylmethionyl-tRNA from spontaneous hydrolysis and promotes its binding to the 30S ribosomal subunits. Also involved in the hydrolysis of GTP during the formation of the 70S ribosomal complex. The protein is Translation initiation factor IF-2 of Jannaschia sp. (strain CCS1).